A 129-amino-acid polypeptide reads, in one-letter code: Protein GLUTAMINE DUMPER 2 (129 aa).

Residues 1–34 (MQTMEGRQYNYQDSINASSSMVVPHSPWHSPVPY) are Extracellular-facing. Residues 35 to 55 (LFGGLAAMLALICVALLILAC) traverse the membrane as a helical segment. Over 56–129 (SYWRLSGSAE…DHNEEEGRRG (74 aa)) the chain is Cytoplasmic. Positions 66–89 (RDLEAGDDAKPDNDTNKTKHTEMP) are disordered. The VIMAG signature appears at 94–98 (VIMAG). A disordered region spans residues 106 to 129 (ATPATRSEQSCTCGDHNEEEGRRG). The span at 120–129 (DHNEEEGRRG) shows a compositional bias: basic and acidic residues.

This sequence belongs to the GLUTAMINE DUMPER 1 (TC 9.B.60) family. As to expression, expressed in the vascular tissues.

It is found in the membrane. In terms of biological role, probable subunit of an amino acid transporter involved in the regulation of the amino acid metabolism. Stimulates amino acid export by activating nonselective amino acid facilitators. In Arabidopsis thaliana (Mouse-ear cress), this protein is Protein GLUTAMINE DUMPER 2 (GDU2).